A 353-amino-acid chain; its full sequence is Putative ABC transporter ATP-binding protein MG303 homolog (353 aa).

The ABC transporter domain maps to 72–312 (LYFYNLSVFV…MQLLQRYEIT (241 aa)). 107-114 (GPSGSGKT) is a binding site for ATP.

Belongs to the ABC transporter superfamily.

This Mycoplasma pneumoniae (strain ATCC 29342 / M129 / Subtype 1) (Mycoplasmoides pneumoniae) protein is Putative ABC transporter ATP-binding protein MG303 homolog.